Here is a 367-residue protein sequence, read N- to C-terminus: Phosphoribosylaminoimidazole-succinocarboxamide synthase (367 aa).

This sequence belongs to the SAICAR synthetase family.

It catalyses the reaction 5-amino-1-(5-phospho-D-ribosyl)imidazole-4-carboxylate + L-aspartate + ATP = (2S)-2-[5-amino-1-(5-phospho-beta-D-ribosyl)imidazole-4-carboxamido]succinate + ADP + phosphate + 2 H(+). The protein operates within purine metabolism; IMP biosynthesis via de novo pathway; 5-amino-1-(5-phospho-D-ribosyl)imidazole-4-carboxamide from 5-amino-1-(5-phospho-D-ribosyl)imidazole-4-carboxylate: step 1/2. The protein is Phosphoribosylaminoimidazole-succinocarboxamide synthase of Shewanella halifaxensis (strain HAW-EB4).